Consider the following 141-residue polypeptide: Hemoglobin subunit alpha (141 aa).

Positions 1 to 141 (VLSDEDKTNV…VSTVLTSKYR (141 aa)) constitute a Globin domain. A Phosphoserine modification is found at Ser-3. Lys-7 bears the N6-succinyllysine mark. Phosphothreonine is present on Thr-8. An N6-succinyllysine modification is found at Lys-11. Lys-16 is modified (N6-acetyllysine; alternate). Lys-16 is subject to N6-succinyllysine; alternate. Tyr-24 is subject to Phosphotyrosine. Ser-35 bears the Phosphoserine mark. N6-succinyllysine is present on Lys-40. Position 49 is a phosphoserine (Ser-49). His-58 contacts O2. A heme b-binding site is contributed by His-87. Phosphoserine is present on Ser-102. Thr-108 bears the Phosphothreonine mark. 2 positions are modified to phosphoserine: Ser-124 and Ser-131. Residues Thr-134 and Thr-137 each carry the phosphothreonine modification. Residue Ser-138 is modified to Phosphoserine.

It belongs to the globin family. Heterotetramer of two alpha chains and two beta chains. As to expression, red blood cells.

Functionally, involved in oxygen transport from the lung to the various peripheral tissues. In terms of biological role, hemopressin acts as an antagonist peptide of the cannabinoid receptor CNR1. Hemopressin-binding efficiently blocks cannabinoid receptor CNR1 and subsequent signaling. In Trichechus inunguis (Amazon manatee), this protein is Hemoglobin subunit alpha (HBA).